The chain runs to 93 residues: UPF0250 protein PSPA7_1111 (93 aa).

The protein belongs to the UPF0250 family.

This is UPF0250 protein PSPA7_1111 from Pseudomonas paraeruginosa (strain DSM 24068 / PA7) (Pseudomonas aeruginosa (strain PA7)).